Consider the following 156-residue polypeptide: Hydrogenase 3 maturation protease (156 aa).

Asp-16, Asp-62, and His-90 together coordinate Ni(2+).

Belongs to the peptidase A31 family. In terms of assembly, monomer.

The enzyme catalyses This enzyme specifically removes a 32-amino acid peptide from the C-terminus of the precursor of the large subunit of E.coli hydrogenase 3 by cleavage at the C-terminal side of Arg-537.. Its function is as follows. Protease involved in the C-terminal processing of HycE, the large subunit of hydrogenase 3. The polypeptide is Hydrogenase 3 maturation protease (hycI) (Escherichia coli O157:H7).